A 185-amino-acid chain; its full sequence is MIDETLLEGEEKMQKAVEVAKDELATVRTGRANPAMFSGIVVDYYGSPTPLNQLASISVPEARLVVIKPYDASQLGAMEKAIRDSDLGVNPSNDGQLIRVSIPQMTEERRKEMVKLAKHKGEEGRITVRGIRRKVKEEIDRIVKDGEAGEDEGTRGEKELENLTHRYVAQIDELVKHKEAELLEV.

The protein belongs to the RRF family.

It is found in the cytoplasm. Functionally, responsible for the release of ribosomes from messenger RNA at the termination of protein biosynthesis. May increase the efficiency of translation by recycling ribosomes from one round of translation to another. The chain is Ribosome-recycling factor from Saccharopolyspora erythraea (strain ATCC 11635 / DSM 40517 / JCM 4748 / NBRC 13426 / NCIMB 8594 / NRRL 2338).